The sequence spans 184 residues: NADH-quinone oxidoreductase subunit B (184 aa).

[4Fe-4S] cluster is bound by residues Cys-63, Cys-64, Cys-128, and Cys-158.

It belongs to the complex I 20 kDa subunit family. In terms of assembly, NDH-1 is composed of 14 different subunits. Subunits NuoB, C, D, E, F, and G constitute the peripheral sector of the complex. [4Fe-4S] cluster is required as a cofactor.

It localises to the cell inner membrane. It catalyses the reaction a quinone + NADH + 5 H(+)(in) = a quinol + NAD(+) + 4 H(+)(out). Its function is as follows. NDH-1 shuttles electrons from NADH, via FMN and iron-sulfur (Fe-S) centers, to quinones in the respiratory chain. The immediate electron acceptor for the enzyme in this species is believed to be ubiquinone. Couples the redox reaction to proton translocation (for every two electrons transferred, four hydrogen ions are translocated across the cytoplasmic membrane), and thus conserves the redox energy in a proton gradient. The chain is NADH-quinone oxidoreductase subunit B from Xanthomonas oryzae pv. oryzae (strain MAFF 311018).